An 892-amino-acid chain; its full sequence is Putative ubiquitin carboxyl-terminal hydrolase 11 (892 aa).

The 116-residue stretch at 17–132 folds into the DUSP domain; it reads YTPEEERRIV…GGPPVPRKLI (116 aa). Residues 69-89 are disordered; the sequence is EPSEVTRPGPIDNHDIIDSES. A USP domain is found at 301 to 880; that stretch reads GGLQNLGNTC…AAYVLFYQRV (580 aa). Cys310 acts as the Nucleophile in catalysis. The segment at 636-660 is disordered; the sequence is NSGNENGHVPDESSRSILSRDTETE. Over residues 643-657 the composition is skewed to basic and acidic residues; it reads HVPDESSRSILSRDT. The Proton acceptor role is filled by His838.

This sequence belongs to the peptidase C19 family.

It carries out the reaction Thiol-dependent hydrolysis of ester, thioester, amide, peptide and isopeptide bonds formed by the C-terminal Gly of ubiquitin (a 76-residue protein attached to proteins as an intracellular targeting signal).. Its function is as follows. Recognizes and hydrolyzes the peptide bond at the C-terminal Gly of ubiquitin. Involved in the processing of poly-ubiquitin precursors as well as that of ubiquitinated proteins. The polypeptide is Putative ubiquitin carboxyl-terminal hydrolase 11 (UBP11) (Arabidopsis thaliana (Mouse-ear cress)).